A 149-amino-acid polypeptide reads, in one-letter code: Transcriptional repressor NrdR (149 aa).

The segment at 3–34 (CPFCSEQETKVIDSRLVAEGQQVRRRRECMVC) is a zinc-finger region. In terms of domain architecture, ATP-cone spans 49–139 (PRVIKRDGSR…VYRSFEDIRE (91 aa)).

This sequence belongs to the NrdR family. Zn(2+) is required as a cofactor.

Its function is as follows. Negatively regulates transcription of bacterial ribonucleotide reductase nrd genes and operons by binding to NrdR-boxes. The protein is Transcriptional repressor NrdR of Alteromonas mediterranea (strain DSM 17117 / CIP 110805 / LMG 28347 / Deep ecotype).